Here is a 141-residue protein sequence, read N- to C-terminus: Hemoglobin subunit alpha (141 aa).

Residues 1 to 141 enclose the Globin domain; sequence VLSAADKAHV…VSTVLTSKYR (141 aa). A Phosphoserine modification is found at Ser3. Residues Lys7 and Lys11 each carry the N6-succinyllysine modification. Lys16 is subject to N6-acetyllysine; alternate. Lys16 carries the N6-succinyllysine; alternate modification. Tyr24 bears the Phosphotyrosine mark. The residue at position 35 (Ser35) is a Phosphoserine. Position 40 is an N6-succinyllysine (Lys40). A Phosphoserine modification is found at Ser49. O2 is bound at residue His58. Residue His87 coordinates heme b. Thr108 carries the post-translational modification Phosphothreonine. Ser124 carries the post-translational modification Phosphoserine. Residues Thr134 and Thr137 each carry the phosphothreonine modification. Phosphoserine is present on Ser138.

This sequence belongs to the globin family. In terms of assembly, heterotetramer of two alpha chains and two beta chains. In terms of tissue distribution, red blood cells.

Its function is as follows. Involved in oxygen transport from the lung to the various peripheral tissues. Functionally, hemopressin acts as an antagonist peptide of the cannabinoid receptor CNR1. Hemopressin-binding efficiently blocks cannabinoid receptor CNR1 and subsequent signaling. The chain is Hemoglobin subunit alpha (HBA) from Bradypus tridactylus (Pale-throated three-toed sloth).